The chain runs to 257 residues: Small ribosomal subunit protein eS1 (257 aa).

The segment at 237-257 (GADGEKVDRPDDYEPPVQQEV) is disordered. Residues 239 to 248 (DGEKVDRPDD) are compositionally biased toward basic and acidic residues.

Belongs to the eukaryotic ribosomal protein eS1 family. In terms of assembly, component of the small ribosomal subunit. Mature ribosomes consist of a small (40S) and a large (60S) subunit. The 40S subunit contains about 33 different proteins and 1 molecule of RNA (18S). The 60S subunit contains about 49 different proteins and 3 molecules of RNA (28S, 5.8S and 5S).

It localises to the cytoplasm. In Caenorhabditis elegans, this protein is Small ribosomal subunit protein eS1.